We begin with the raw amino-acid sequence, 504 residues long: Pup--protein ligase (504 aa).

E30 contributes to the Mg(2+) binding site. Residue R74 coordinates ATP. Y76 contributes to the Mg(2+) binding site. D78 serves as the catalytic Proton acceptor. E84 contacts Mg(2+). T87 and W459 together coordinate ATP.

The protein belongs to the Pup ligase/Pup deamidase family. Pup-conjugating enzyme subfamily.

It carries out the reaction ATP + [prokaryotic ubiquitin-like protein]-L-glutamate + [protein]-L-lysine = ADP + phosphate + N(6)-([prokaryotic ubiquitin-like protein]-gamma-L-glutamyl)-[protein]-L-lysine.. The protein operates within protein degradation; proteasomal Pup-dependent pathway. Its pathway is protein modification; protein pupylation. Functionally, catalyzes the covalent attachment of the prokaryotic ubiquitin-like protein modifier Pup to the proteasomal substrate proteins, thereby targeting them for proteasomal degradation. This tagging system is termed pupylation. The ligation reaction involves the side-chain carboxylate of the C-terminal glutamate of Pup and the side-chain amino group of a substrate lysine. In Corynebacterium urealyticum (strain ATCC 43042 / DSM 7109), this protein is Pup--protein ligase.